A 350-amino-acid polypeptide reads, in one-letter code: Cobalt-precorrin-5B C(1)-methyltransferase (350 aa).

The protein belongs to the CbiD family.

The enzyme catalyses Co-precorrin-5B + S-adenosyl-L-methionine = Co-precorrin-6A + S-adenosyl-L-homocysteine. The protein operates within cofactor biosynthesis; adenosylcobalamin biosynthesis; cob(II)yrinate a,c-diamide from sirohydrochlorin (anaerobic route): step 6/10. Catalyzes the methylation of C-1 in cobalt-precorrin-5B to form cobalt-precorrin-6A. In Syntrophotalea carbinolica (strain DSM 2380 / NBRC 103641 / GraBd1) (Pelobacter carbinolicus), this protein is Cobalt-precorrin-5B C(1)-methyltransferase.